The primary structure comprises 163 residues: MTKVLLGFMGVGKTTVSKHLSMHCKDMDAIIEAKIGMSIAAFFEQHGEIAFRTIENQVLKDLLFANDNSVIVTGGGVVVLQENRQLLRKNHQHNILLVASFETLYQRLKHDKKSQRPLFLKYSKEAFYEFYQQRMVFYEGLSDLVIRVDHRTPEEVANIIEGY.

ATP is bound at residue Gly-10–Thr-15. Thr-14 contacts Mg(2+). Asp-28, Arg-52, and Gly-75 together coordinate substrate. Arg-116 contributes to the ATP binding site. Position 134 (Arg-134) interacts with substrate. Residue Arg-151 participates in ATP binding.

The protein belongs to the shikimate kinase family. As to quaternary structure, monomer. Requires Mg(2+) as cofactor.

It localises to the cytoplasm. The enzyme catalyses shikimate + ATP = 3-phosphoshikimate + ADP + H(+). It functions in the pathway metabolic intermediate biosynthesis; chorismate biosynthesis; chorismate from D-erythrose 4-phosphate and phosphoenolpyruvate: step 5/7. Its function is as follows. Catalyzes the specific phosphorylation of the 3-hydroxyl group of shikimic acid using ATP as a cosubstrate. This is Shikimate kinase from Streptococcus pyogenes serotype M49 (strain NZ131).